The following is a 190-amino-acid chain: Crossover junction endodeoxyribonuclease RuvC (190 aa).

Active-site residues include D8, E67, and D139. Positions 8, 67, and 139 each coordinate Mg(2+).

Belongs to the RuvC family. In terms of assembly, homodimer which binds Holliday junction (HJ) DNA. The HJ becomes 2-fold symmetrical on binding to RuvC with unstacked arms; it has a different conformation from HJ DNA in complex with RuvA. In the full resolvosome a probable DNA-RuvA(4)-RuvB(12)-RuvC(2) complex forms which resolves the HJ. Requires Mg(2+) as cofactor.

It is found in the cytoplasm. The catalysed reaction is Endonucleolytic cleavage at a junction such as a reciprocal single-stranded crossover between two homologous DNA duplexes (Holliday junction).. Its function is as follows. The RuvA-RuvB-RuvC complex processes Holliday junction (HJ) DNA during genetic recombination and DNA repair. Endonuclease that resolves HJ intermediates. Cleaves cruciform DNA by making single-stranded nicks across the HJ at symmetrical positions within the homologous arms, yielding a 5'-phosphate and a 3'-hydroxyl group; requires a central core of homology in the junction. The consensus cleavage sequence is 5'-(A/T)TT(C/G)-3'. Cleavage occurs on the 3'-side of the TT dinucleotide at the point of strand exchange. HJ branch migration catalyzed by RuvA-RuvB allows RuvC to scan DNA until it finds its consensus sequence, where it cleaves and resolves the cruciform DNA. This is Crossover junction endodeoxyribonuclease RuvC from Haemophilus influenzae (strain PittEE).